The sequence spans 149 residues: MSQTLQAAYAAKRKARRFAVQGIYEWQMSHNPVHEIEARTRAENAMHKVDLNYYHELLTQVIAQHEDLDALLIPVLDREIDALDGVELATLRLGAYELRDHLEIPYRVVLDEAIELAKHFGGADSHKYINGVLDRLSSTLRSAEKQQAK.

It belongs to the NusB family.

Functionally, involved in transcription antitermination. Required for transcription of ribosomal RNA (rRNA) genes. Binds specifically to the boxA antiterminator sequence of the ribosomal RNA (rrn) operons. The protein is Transcription antitermination protein NusB of Acinetobacter baumannii (strain AB307-0294).